The sequence spans 86 residues: Small ribosomal subunit protein bS16 (86 aa).

Belongs to the bacterial ribosomal protein bS16 family.

This chain is Small ribosomal subunit protein bS16, found in Borreliella burgdorferi (strain ATCC 35210 / DSM 4680 / CIP 102532 / B31) (Borrelia burgdorferi).